A 1806-amino-acid chain; its full sequence is uncharacterized protein (1806 aa).

Disordered stretches follow at residues Glu38–Phe131 and Lys158–Pro282. Residues Lys51 to Pro70 are compositionally biased toward low complexity. Phosphoserine occurs at positions 52, 56, 79, 87, 88, 92, and 128. The span at Pro82 to Glu100 shows a compositional bias: low complexity. A compositionally biased stretch (basic and acidic residues) spans Asp226–Pro236. Ser244 and Ser284 each carry phosphoserine. 4 disordered regions span residues Arg299–Arg320, Lys355–Trp431, Ser456–Asp604, and Gln627–Pro696. A Phosphoserine modification is found at Ser366. At Thr378 the chain carries Phosphothreonine. Phosphoserine is present on Ser384. Residues Trp386 to Ala400 show a composition bias toward basic and acidic residues. Position 404 is a phosphoserine (Ser404). Positions Glu412–Asp422 are enriched in basic and acidic residues. A compositionally biased stretch (low complexity) spans Ser456–Pro470. Residues Ser458 and Ser508 each carry the phosphoserine modification. The span at Leu514–Glu523 shows a compositional bias: polar residues. Composition is skewed to basic and acidic residues over residues Val524–Ser549 and Thr564–Glu573. Thr600 bears the Phosphothreonine mark. 2 stretches are compositionally biased toward basic and acidic residues: residues Ala641–Pro652 and Asp661–Arg674. Residue Ser749 is modified to Phosphoserine. 3 disordered regions span residues Gln860–Thr901, Ser969–Lys989, and Gln1000–Ser1019. Over residues Arg889 to Arg900 the composition is skewed to polar residues. 2 positions are modified to phosphoserine: Ser969 and Ser981. The segment covering Ser969–Asp978 has biased composition (basic and acidic residues). The residue at position 1059 (Thr1059) is a Phosphothreonine. Ser1063 and Ser1154 each carry phosphoserine. The disordered stretch occupies residues Arg1134 to Lys1178. The span at Pro1142 to Leu1166 shows a compositional bias: polar residues. A Phosphothreonine modification is found at Thr1163. Over residues Arg1169–Lys1178 the composition is skewed to basic and acidic residues. Phosphothreonine is present on residues Thr1179 and Thr1185. 2 disordered regions span residues Pro1216–Ser1265 and Lys1291–Val1493. Residue Ser1224 is modified to Phosphoserine. Thr1226 is subject to Phosphothreonine. Composition is skewed to basic and acidic residues over residues Glu1244–Pro1254 and Asp1317–Ala1331. Position 1366 is a phosphoserine (Ser1366). Basic and acidic residues-rich tracts occupy residues Asp1393 to Ser1410 and His1426 to Lys1437. Phosphoserine is present on Ser1441. Over residues Asp1462–Pro1483 the composition is skewed to basic and acidic residues. Phosphoserine occurs at positions 1488 and 1506. Disordered regions lie at residues Gln1512–Asp1627 and Ala1642–Val1806. The segment covering Thr1522–Val1531 has biased composition (basic and acidic residues). Positions Gln1537–Pro1568 are enriched in polar residues. 2 positions are modified to phosphoserine: Ser1555 and Ser1662. Positions Leu1649–Ser1666 are enriched in basic residues. 2 stretches are compositionally biased toward basic and acidic residues: residues Arg1667 to Leu1677 and Asp1689 to Pro1714. Residues Ser1701, Ser1757, Ser1760, and Ser1786 each carry the phosphoserine modification. Residues Pro1753–Pro1764 show a composition bias toward low complexity.

This is an uncharacterized protein from Homo sapiens (Human).